The chain runs to 391 residues: Formate-dependent phosphoribosylglycinamide formyltransferase (391 aa).

Residues 18–19 (EL) and E78 each bind N(1)-(5-phospho-beta-D-ribosyl)glycinamide. ATP contacts are provided by residues R110, K151, 156 to 161 (SSGKGQ), 191 to 194 (EEFI), and E199. One can recognise an ATP-grasp domain in the interval 115 to 305 (ELVSRDLKIK…EFELHLRAFL (191 aa)). Positions 264 and 276 each coordinate Mg(2+). Residues D283, K353, and 360–361 (RR) contribute to the N(1)-(5-phospho-beta-D-ribosyl)glycinamide site.

This sequence belongs to the PurK/PurT family. As to quaternary structure, homodimer.

The enzyme catalyses N(1)-(5-phospho-beta-D-ribosyl)glycinamide + formate + ATP = N(2)-formyl-N(1)-(5-phospho-beta-D-ribosyl)glycinamide + ADP + phosphate + H(+). It participates in purine metabolism; IMP biosynthesis via de novo pathway; N(2)-formyl-N(1)-(5-phospho-D-ribosyl)glycinamide from N(1)-(5-phospho-D-ribosyl)glycinamide (formate route): step 1/1. In terms of biological role, involved in the de novo purine biosynthesis. Catalyzes the transfer of formate to 5-phospho-ribosyl-glycinamide (GAR), producing 5-phospho-ribosyl-N-formylglycinamide (FGAR). Formate is provided by PurU via hydrolysis of 10-formyl-tetrahydrofolate. The sequence is that of Formate-dependent phosphoribosylglycinamide formyltransferase from Prochlorococcus marinus (strain MIT 9312).